Reading from the N-terminus, the 288-residue chain is 4-hydroxy-3-methylbut-2-enyl diphosphate reductase (288 aa).

Cysteine 12 provides a ligand contact to [4Fe-4S] cluster. Residues histidine 42 and histidine 77 each contribute to the (2E)-4-hydroxy-3-methylbut-2-enyl diphosphate site. Dimethylallyl diphosphate is bound by residues histidine 42 and histidine 77. Isopentenyl diphosphate is bound by residues histidine 42 and histidine 77. Cysteine 99 lines the [4Fe-4S] cluster pocket. (2E)-4-hydroxy-3-methylbut-2-enyl diphosphate is bound at residue histidine 127. Histidine 127 provides a ligand contact to dimethylallyl diphosphate. Residue histidine 127 participates in isopentenyl diphosphate binding. Glutamate 129 acts as the Proton donor in catalysis. Threonine 165 provides a ligand contact to (2E)-4-hydroxy-3-methylbut-2-enyl diphosphate. Cysteine 193 is a binding site for [4Fe-4S] cluster. Positions 221, 222, 223, and 265 each coordinate (2E)-4-hydroxy-3-methylbut-2-enyl diphosphate. Residues serine 221, serine 222, asparagine 223, and serine 265 each coordinate dimethylallyl diphosphate. Serine 221, serine 222, asparagine 223, and serine 265 together coordinate isopentenyl diphosphate.

Belongs to the IspH family. [4Fe-4S] cluster serves as cofactor.

It catalyses the reaction isopentenyl diphosphate + 2 oxidized [2Fe-2S]-[ferredoxin] + H2O = (2E)-4-hydroxy-3-methylbut-2-enyl diphosphate + 2 reduced [2Fe-2S]-[ferredoxin] + 2 H(+). The catalysed reaction is dimethylallyl diphosphate + 2 oxidized [2Fe-2S]-[ferredoxin] + H2O = (2E)-4-hydroxy-3-methylbut-2-enyl diphosphate + 2 reduced [2Fe-2S]-[ferredoxin] + 2 H(+). It functions in the pathway isoprenoid biosynthesis; dimethylallyl diphosphate biosynthesis; dimethylallyl diphosphate from (2E)-4-hydroxy-3-methylbutenyl diphosphate: step 1/1. It participates in isoprenoid biosynthesis; isopentenyl diphosphate biosynthesis via DXP pathway; isopentenyl diphosphate from 1-deoxy-D-xylulose 5-phosphate: step 6/6. In terms of biological role, catalyzes the conversion of 1-hydroxy-2-methyl-2-(E)-butenyl 4-diphosphate (HMBPP) into a mixture of isopentenyl diphosphate (IPP) and dimethylallyl diphosphate (DMAPP). Acts in the terminal step of the DOXP/MEP pathway for isoprenoid precursor biosynthesis. In Thermoanaerobacter pseudethanolicus (strain ATCC 33223 / 39E) (Clostridium thermohydrosulfuricum), this protein is 4-hydroxy-3-methylbut-2-enyl diphosphate reductase.